The following is a 178-amino-acid chain: Large ribosomal subunit protein uL6 (178 aa).

Belongs to the universal ribosomal protein uL6 family. As to quaternary structure, part of the 50S ribosomal subunit.

Its function is as follows. This protein binds to the 23S rRNA, and is important in its secondary structure. It is located near the subunit interface in the base of the L7/L12 stalk, and near the tRNA binding site of the peptidyltransferase center. The chain is Large ribosomal subunit protein uL6 from Campylobacter fetus subsp. fetus (strain 82-40).